A 154-amino-acid polypeptide reads, in one-letter code: Aspartate 1-decarboxylase 1 (154 aa).

Serine 26 (schiff-base intermediate with substrate; via pyruvic acid) is an active-site residue. Serine 26 is subject to Pyruvic acid (Ser). Threonine 58 provides a ligand contact to substrate. The active-site Proton donor is the tyrosine 59. 74–76 (GAA) lines the substrate pocket. Residues 129–154 (VGLVRGDTNSPQPSLSEQAGDPRRAQ) form a disordered region. Over residues 135-145 (DTNSPQPSLSE) the composition is skewed to polar residues.

The protein belongs to the PanD family. In terms of assembly, heterooctamer of four alpha and four beta subunits. Pyruvate serves as cofactor. Post-translationally, is synthesized initially as an inactive proenzyme, which is activated by self-cleavage at a specific serine bond to produce a beta-subunit with a hydroxyl group at its C-terminus and an alpha-subunit with a pyruvoyl group at its N-terminus.

The protein localises to the cytoplasm. It carries out the reaction L-aspartate + H(+) = beta-alanine + CO2. Its pathway is cofactor biosynthesis; (R)-pantothenate biosynthesis; beta-alanine from L-aspartate: step 1/1. Catalyzes the pyruvoyl-dependent decarboxylation of aspartate to produce beta-alanine. The chain is Aspartate 1-decarboxylase 1 from Frankia casuarinae (strain DSM 45818 / CECT 9043 / HFP020203 / CcI3).